Here is a 247-residue protein sequence, read N- to C-terminus: 5'-nucleotidase SurE (247 aa).

A divalent metal cation is bound by residues aspartate 8, aspartate 9, serine 39, and asparagine 91.

The protein belongs to the SurE nucleotidase family. The cofactor is a divalent metal cation.

The protein resides in the cytoplasm. The enzyme catalyses a ribonucleoside 5'-phosphate + H2O = a ribonucleoside + phosphate. Functionally, nucleotidase that shows phosphatase activity on nucleoside 5'-monophosphates. The polypeptide is 5'-nucleotidase SurE (Nitrosomonas eutropha (strain DSM 101675 / C91 / Nm57)).